Consider the following 187-residue polypeptide: Choriogonadotropin subunit beta variant 1 (187 aa).

Positions 1–50 (MSTFPVLAEDIPLRERHVKGRVDPHFRAPKMEMFQRLLLLLLLSMGGTWA) are cleaved as a signal peptide. 6 disulfide bridges follow: cysteine 59/cysteine 107, cysteine 73/cysteine 122, cysteine 76/cysteine 160, cysteine 84/cysteine 138, cysteine 88/cysteine 140, and cysteine 143/cysteine 150. N-linked (GlcNAc...) asparagine glycans are attached at residues asparagine 63 and asparagine 80. A disordered region spans residues 161 to 187 (DDPRFQDSSSSKAPPPSLPSPSRLPGP). Residues 173 to 187 (APPPSLPSPSRLPGP) are compositionally biased toward pro residues.

Belongs to the glycoprotein hormones subunit beta family. As to expression, expressed in placenta, testis and pituitary.

Its subcellular location is the secreted. In Homo sapiens (Human), this protein is Choriogonadotropin subunit beta variant 1 (CGB1).